Reading from the N-terminus, the 134-residue chain is MAPRLLFCLVLCFLRAEPTNAGVIQTPRHKVTGKGQEATLWCEPISGHSAVFWYRQTIVQGLEFLTYFRNQAPIDDSGMPKERFSAQMPNQSHSTLKIQSTQPQDSAVYLCASSLSTGVSYEQYFGPGTRLTVL.

Residues 1 to 19 form the signal peptide; the sequence is MAPRLLFCLVLCFLRAEPT. The v segment stretch occupies residues 20–115; sequence NAGVIQTPRH…SAVYLCASSL (96 aa). A disulfide bridge links cysteine 42 with cysteine 111. A glycan (N-linked (GlcNAc...) asparagine) is linked at asparagine 90. Positions 116-119 are d segment; that stretch reads STGV. The interval 120 to 134 is j segment; it reads SYEQYFGPGTRLTVL.

This chain is T-cell receptor beta chain V region CTL-F3, found in Mus musculus (Mouse).